Here is a 555-residue protein sequence, read N- to C-terminus: Formate--tetrahydrofolate ligase (555 aa).

Residue 65–72 (TPAGEGKS) participates in ATP binding.

The protein belongs to the formate--tetrahydrofolate ligase family.

It carries out the reaction (6S)-5,6,7,8-tetrahydrofolate + formate + ATP = (6R)-10-formyltetrahydrofolate + ADP + phosphate. Its pathway is one-carbon metabolism; tetrahydrofolate interconversion. The protein is Formate--tetrahydrofolate ligase of Lactococcus lactis subsp. lactis (strain IL1403) (Streptococcus lactis).